The sequence spans 342 residues: UDP-3-O-acylglucosamine N-acyltransferase (342 aa).

His241 acts as the Proton acceptor in catalysis.

The protein belongs to the transferase hexapeptide repeat family. LpxD subfamily. In terms of assembly, homotrimer.

The catalysed reaction is a UDP-3-O-[(3R)-3-hydroxyacyl]-alpha-D-glucosamine + a (3R)-hydroxyacyl-[ACP] = a UDP-2-N,3-O-bis[(3R)-3-hydroxyacyl]-alpha-D-glucosamine + holo-[ACP] + H(+). Its pathway is bacterial outer membrane biogenesis; LPS lipid A biosynthesis. In terms of biological role, catalyzes the N-acylation of UDP-3-O-acylglucosamine using 3-hydroxyacyl-ACP as the acyl donor. Is involved in the biosynthesis of lipid A, a phosphorylated glycolipid that anchors the lipopolysaccharide to the outer membrane of the cell. This Pasteurella multocida (strain Pm70) protein is UDP-3-O-acylglucosamine N-acyltransferase.